Consider the following 147-residue polypeptide: Cytochrome c-type biogenesis protein CcmE (147 aa).

Residues 1–9 (MKSLKKQRR) are Cytoplasmic-facing. Residues 10-30 (IQIIALATVALVGSTALIGYA) traverse the membrane as a helical; Signal-anchor for type II membrane protein segment. The Periplasmic segment spans residues 31–147 (MRDGINYFRS…EQGVYREGDS (117 aa)). Heme-binding residues include H123 and Y127.

The protein belongs to the CcmE/CycJ family.

The protein localises to the cell inner membrane. Heme chaperone required for the biogenesis of c-type cytochromes. Transiently binds heme delivered by CcmC and transfers the heme to apo-cytochromes in a process facilitated by CcmF and CcmH. The chain is Cytochrome c-type biogenesis protein CcmE from Ruegeria sp. (strain TM1040) (Silicibacter sp.).